A 924-amino-acid polypeptide reads, in one-letter code: MNRRDFIKNTAIASAASVAGLSVPSSMLGAQEEDWKWDKAVCRFCGTGCGIMIARKDGKIVATKGDPAAPVNRGLNCIKGYFNAKIMYGEDRLVMPLLRMNEKGEFDKKGKFQQVSWQRAFDEMEKQFKKAYNELGVTGIGIFGSGQYTIQEGYAALKLAKAGFRTNNIDPNARHCMASAVVGFMQTFGVDEPSGCYDDIELTDTIITWGANMAEMHPILWSRVSDRKLSNLDKVKVVNLSTFSNRTSNIADIEIIFKPNTDLAIWNYIAREIVYNHPEAMDMKFIKDHCVFATGYADIGYGMRNNPNHPKFKESEKDTVEKENVITLDDEEATSLSYLGVKAGDKFEMKHQGVADKNWEISFEEFKKGLAPYTLEYTAKVAKGDDNESLEDFKKKLQELANLYIEKNRKVVSFWTMGFNQHTRGSWVNEQAYMVHFLLGKQAKPGSGAFSLTGQPSACGTAREVGTFSHRLPADMVVANPKHREISEKIWKVPAKTINPKPGSPYLNIMRDLEDGKIKFAWVQVNNPWQNTANANHWIAAAREMDNFIVVSDCYPGISAKVADLILPSAMIYEKWGAYGNAERRTQHWKQQVLPVGAAMSDTWQILEFAKRFKLKEVWKEQKVDNKLTLPSVLEEAKAMGYSEDDTLFDVLFANKEAKSFNPNDAIAKGFDNTDVKGDERKIQGSDGKEFAGYGFFVQKYLWEEYRKFGLGHGHDLADFDTYHKVRGLRWPVVNGKETQWRFNTKFDYYAKKAAPNSDFAFYGDFNKMLTNGDLIAPKDEKEHSIKNKAKIFFRPFMKAPERPSKEYPFWLATGRVLEHWHSGTMTMRVPELYRAVPEALCYMSEKDGEKLGLNQGDLVWVESRRGKVKARVDMRGRNKPPVGLVYVPWFDENVYINKVTLDATCPLSKQTDFKKCAVKIYKA.

The segment at residues 1–30 (MNRRDFIKNTAIASAASVAGLSVPSSMLGA) is a signal peptide (tat-type signal). The 4Fe-4S Mo/W bis-MGD-type domain occupies 35–91 (WKWDKAVCRFCGTGCGIMIARKDGKIVATKGDPAAPVNRGLNCIKGYFNAKIMYGED). Residues Cys42, Cys45, Cys49, and Cys77 each coordinate [4Fe-4S] cluster. Mo-bis(molybdopterin guanine dinucleotide) is bound by residues Lys79, Gln147, Asn172, Cys176, 209-216 (WGANMAEM), Met417, Gln421, Asn527, 552-553 (SD), Lys575, Asp602, and 814-823 (TGRVLEHWHS). Trp890 serves as a coordination point for substrate. Residues Asn898 and Lys915 each contribute to the Mo-bis(molybdopterin guanine dinucleotide) site.

The protein belongs to the prokaryotic molybdopterin-containing oxidoreductase family. NasA/NapA/NarB subfamily. As to quaternary structure, component of the periplasmic nitrate reductase NapAB complex composed of NapA and NapB. The cofactor is [4Fe-4S] cluster. Mo-bis(molybdopterin guanine dinucleotide) serves as cofactor. Predicted to be exported by the Tat system. The position of the signal peptide cleavage has not been experimentally proven.

It localises to the periplasm. The enzyme catalyses 2 Fe(II)-[cytochrome] + nitrate + 2 H(+) = 2 Fe(III)-[cytochrome] + nitrite + H2O. Functionally, catalytic subunit of the periplasmic nitrate reductase complex NapAB. Receives electrons from NapB and catalyzes the reduction of nitrate to nitrite. The protein is Periplasmic nitrate reductase of Campylobacter jejuni subsp. jejuni serotype O:6 (strain 81116 / NCTC 11828).